Consider the following 381-residue polypeptide: UDP-4-amino-4-deoxy-L-arabinose--oxoglutarate aminotransferase (381 aa).

Lysine 182 bears the N6-(pyridoxal phosphate)lysine mark.

It belongs to the DegT/DnrJ/EryC1 family. ArnB subfamily. In terms of assembly, homodimer. Pyridoxal 5'-phosphate serves as cofactor.

It catalyses the reaction UDP-4-amino-4-deoxy-beta-L-arabinose + 2-oxoglutarate = UDP-beta-L-threo-pentopyranos-4-ulose + L-glutamate. It functions in the pathway nucleotide-sugar biosynthesis; UDP-4-deoxy-4-formamido-beta-L-arabinose biosynthesis; UDP-4-deoxy-4-formamido-beta-L-arabinose from UDP-alpha-D-glucuronate: step 2/3. It participates in bacterial outer membrane biogenesis; lipopolysaccharide biosynthesis. Catalyzes the conversion of UDP-4-keto-arabinose (UDP-Ara4O) to UDP-4-amino-4-deoxy-L-arabinose (UDP-L-Ara4N). The modified arabinose is attached to lipid A and is required for resistance to polymyxin and cationic antimicrobial peptides. This Photorhabdus laumondii subsp. laumondii (strain DSM 15139 / CIP 105565 / TT01) (Photorhabdus luminescens subsp. laumondii) protein is UDP-4-amino-4-deoxy-L-arabinose--oxoglutarate aminotransferase.